Consider the following 341-residue polypeptide: MSDLKPKQVFEETIFSQQDKPELTAQQQFDQQQTFIPTTIEETEPELEDALEQVIRPSGRRKWLAGGLFAAFAGLVGWQAVDSVLSAMQNGDWLTLGWSGFISVLAGLGLGAMGKELWKLRQLRHLFSVQEQGEKLLQSDSVGQGKAFCQQVAKQSGVAEENPAYDRWKNSVNTAHSDAEILQMYDAMVVTQQDKQATKVISRFATESAALVAISPLAIADMLLVAWRNFKMIDTLSTIYGIELGYASRIRLLRLVLANMAVAGASELVIDAGMDLMSMDLAGKLSARAGQGVGVGILTARLGLKAMALLRPIPWQAETQVKLSAIRKEIVSKVASITLKP.

4 consecutive transmembrane segments (helical) span residues 64-84, 93-113, 207-227, and 255-275; these read LAGG…VDSV, WLTL…LGAM, ESAA…LVAW, and LVLA…AGMD.

Belongs to the UPF0283 family.

It localises to the cell inner membrane. This is UPF0283 membrane protein VV2076 from Vibrio vulnificus (strain YJ016).